A 380-amino-acid polypeptide reads, in one-letter code: Cytochrome b (380 aa).

4 consecutive transmembrane segments (helical) span residues 34–54 (FGSL…LLAM), 78–99 (WLIR…YLHI), 114–134 (WNTG…GYVL), and 179–199 (FFAL…IHLT). Positions 84 and 98 each coordinate heme b. The heme b site is built by His183 and His197. A ubiquinone is bound at residue His202. Transmembrane regions (helical) follow at residues 227–247 (LKDF…ALFT), 289–309 (LGGV…PFLH), 321–341 (LSQT…WIGS), and 348–368 (FITI…ILFP).

This sequence belongs to the cytochrome b family. As to quaternary structure, the cytochrome bc1 complex contains 11 subunits: 3 respiratory subunits (MT-CYB, CYC1 and UQCRFS1), 2 core proteins (UQCRC1 and UQCRC2) and 6 low-molecular weight proteins (UQCRH/QCR6, UQCRB/QCR7, UQCRQ/QCR8, UQCR10/QCR9, UQCR11/QCR10 and a cleavage product of UQCRFS1). This cytochrome bc1 complex then forms a dimer. Requires heme b as cofactor.

Its subcellular location is the mitochondrion inner membrane. Its function is as follows. Component of the ubiquinol-cytochrome c reductase complex (complex III or cytochrome b-c1 complex) that is part of the mitochondrial respiratory chain. The b-c1 complex mediates electron transfer from ubiquinol to cytochrome c. Contributes to the generation of a proton gradient across the mitochondrial membrane that is then used for ATP synthesis. In Coracias caudatus (Lilac-breasted roller), this protein is Cytochrome b (MT-CYB).